The sequence spans 1326 residues: Paired amphipathic helix protein Sin3-like 4 (1326 aa).

PAH domains lie at 8-78 (QKLT…LPKG), 95-165 (KPVE…LPDT), and 292-367 (IPSS…LAQC). 4 disordered regions span residues 272 to 299 (DDDS…STYD), 715 to 812 (VPSR…RAET), 844 to 864 (SVAG…TEEL), and 927 to 1000 (SKSK…EGDM). Basic and acidic residues predominate over residues 721 to 737 (GAEDREDAVKSTNHDRE). 4 stretches are compositionally biased toward polar residues: residues 744-757 (SPQN…SMRS), 781-805 (SSKT…NLTT), 844-861 (SVAG…TSGT), and 942-961 (PRSS…SGTD). Basic and acidic residues predominate over residues 967–981 (DCYREDDIDHNKVES).

The protein resides in the nucleus. In terms of biological role, acts as a transcriptional repressor. Plays roles in regulating gene expression and genome stability. In Arabidopsis thaliana (Mouse-ear cress), this protein is Paired amphipathic helix protein Sin3-like 4 (SNL4).